Consider the following 358-residue polypeptide: Phosphoserine aminotransferase (358 aa).

Position 41 (Arg-41) interacts with L-glutamate. Residues 75–76 (AS), Trp-100, Thr-148, Asp-167, and Gln-190 each bind pyridoxal 5'-phosphate. N6-(pyridoxal phosphate)lysine is present on Lys-191. A pyridoxal 5'-phosphate-binding site is contributed by 233-234 (NT).

This sequence belongs to the class-V pyridoxal-phosphate-dependent aminotransferase family. SerC subfamily. As to quaternary structure, homodimer. Pyridoxal 5'-phosphate is required as a cofactor.

The protein resides in the cytoplasm. It carries out the reaction O-phospho-L-serine + 2-oxoglutarate = 3-phosphooxypyruvate + L-glutamate. It catalyses the reaction 4-(phosphooxy)-L-threonine + 2-oxoglutarate = (R)-3-hydroxy-2-oxo-4-phosphooxybutanoate + L-glutamate. Its pathway is amino-acid biosynthesis; L-serine biosynthesis; L-serine from 3-phospho-D-glycerate: step 2/3. It functions in the pathway cofactor biosynthesis; pyridoxine 5'-phosphate biosynthesis; pyridoxine 5'-phosphate from D-erythrose 4-phosphate: step 3/5. Catalyzes the reversible conversion of 3-phosphohydroxypyruvate to phosphoserine and of 3-hydroxy-2-oxo-4-phosphonooxybutanoate to phosphohydroxythreonine. This Campylobacter lari (strain RM2100 / D67 / ATCC BAA-1060) protein is Phosphoserine aminotransferase.